We begin with the raw amino-acid sequence, 390 residues long: MDSEEIIELERKFIMQTYTRQPIVLSHGKGATVWDIEGNSYIDCFAGVAVNSIGHAHPKVALAICHQAQRLIHSSNIYYTREQVELAKLLTAISPHDRVFFANSGAEANEGAIKLARKFTGKSEIIAAENSFHGRTLATVTATGQKKYSEPFRPLPEGFKHVPYGDIGAMADAVGDETAAIILEPVQGEGGVIIPPEGYLKDVQELARQNDVLLILDEVQTGFGRTGAMFASQLFGVEPDITTVAKAMGGGYPIGAVLANERVAMAFEPGDHGSTFGGNPWGCAAAIATIEVLMDEKLPERAAKMGSYFLGRLRQVLHGCDAVRDIRGVGLMIGIEIDGECAGVVDAAREMGVLINCTAGKVIRIVPPLVIKKEEIDAAVDVLGHVISDL.

Residues 105-106 (GA) and Phe132 each bind pyridoxal 5'-phosphate. Arg135 is a binding site for N(2)-acetyl-L-ornithine. Residue 217-220 (DEVQ) coordinates pyridoxal 5'-phosphate. Position 246 is an N6-(pyridoxal phosphate)lysine (Lys246). Ser274 is a N(2)-acetyl-L-ornithine binding site. Thr275 is a pyridoxal 5'-phosphate binding site.

It belongs to the class-III pyridoxal-phosphate-dependent aminotransferase family. ArgD subfamily. In terms of assembly, homodimer. Requires pyridoxal 5'-phosphate as cofactor.

The protein resides in the cytoplasm. It catalyses the reaction N(2)-acetyl-L-ornithine + 2-oxoglutarate = N-acetyl-L-glutamate 5-semialdehyde + L-glutamate. It functions in the pathway amino-acid biosynthesis; L-arginine biosynthesis; N(2)-acetyl-L-ornithine from L-glutamate: step 4/4. The chain is Acetylornithine aminotransferase from Methanothermobacter thermautotrophicus (strain ATCC 29096 / DSM 1053 / JCM 10044 / NBRC 100330 / Delta H) (Methanobacterium thermoautotrophicum).